The sequence spans 301 residues: GTPase Era (301 aa).

The region spanning 7 to 175 is the Era-type G domain; it reads YCGFIAIVGR…AAIVRKHLPE (169 aa). A G1 region spans residues 15–22; sequence GRPNVGKS. 15–22 lines the GTP pocket; the sequence is GRPNVGKS. Residues 41-45 are G2; sequence QTTRH. Residues 62-65 form a G3 region; it reads DTPG. GTP-binding positions include 62–66 and 124–127; these read DTPGL and NKVD. The tract at residues 124 to 127 is G4; sequence NKVD. Positions 154–156 are G5; it reads ISA. Residues 206-283 enclose the KH type-2 domain; that stretch reads LGAELPYSVT…HLELWVKVKS (78 aa).

Belongs to the TRAFAC class TrmE-Era-EngA-EngB-Septin-like GTPase superfamily. Era GTPase family. Monomer.

It localises to the cytoplasm. Its subcellular location is the cell inner membrane. Its function is as follows. An essential GTPase that binds both GDP and GTP, with rapid nucleotide exchange. Plays a role in 16S rRNA processing and 30S ribosomal subunit biogenesis and possibly also in cell cycle regulation and energy metabolism. In Shigella flexneri serotype 5b (strain 8401), this protein is GTPase Era.